The primary structure comprises 430 residues: Adenylosuccinate synthetase (430 aa).

GTP-binding positions include 12 to 18 (GDEGKGK) and 40 to 42 (GHT). The active-site Proton acceptor is the Asp-13. 2 residues coordinate Mg(2+): Asp-13 and Gly-40. IMP-binding positions include 13–16 (DEGK), 38–41 (NAGH), Thr-130, Arg-144, Gln-224, Thr-239, and Arg-303. The active-site Proton donor is His-41. 299-305 (TVTGRKR) is a substrate binding site. Residues Arg-305, 331 to 333 (KLD), and 413 to 415 (STS) each bind GTP.

The protein belongs to the adenylosuccinate synthetase family. As to quaternary structure, homodimer. Mg(2+) serves as cofactor.

The protein resides in the cytoplasm. It carries out the reaction IMP + L-aspartate + GTP = N(6)-(1,2-dicarboxyethyl)-AMP + GDP + phosphate + 2 H(+). It functions in the pathway purine metabolism; AMP biosynthesis via de novo pathway; AMP from IMP: step 1/2. Functionally, plays an important role in the de novo pathway of purine nucleotide biosynthesis. Catalyzes the first committed step in the biosynthesis of AMP from IMP. The chain is Adenylosuccinate synthetase from Cereibacter sphaeroides (strain KD131 / KCTC 12085) (Rhodobacter sphaeroides).